A 724-amino-acid polypeptide reads, in one-letter code: Phosphoribosylformylglycinamidine synthase subunit PurL (724 aa).

Residue histidine 46 is part of the active site. Tyrosine 49 and lysine 88 together coordinate ATP. Residue glutamate 90 participates in Mg(2+) binding. Residues 91 to 94 (SHNH) and arginine 113 each bind substrate. Histidine 92 (proton acceptor) is an active-site residue. A Mg(2+)-binding site is contributed by aspartate 114. Glutamine 237 lines the substrate pocket. A Mg(2+)-binding site is contributed by aspartate 265. 309–311 (ESQ) is a binding site for substrate. 2 residues coordinate ATP: aspartate 489 and glycine 526. Asparagine 527 is a Mg(2+) binding site. A substrate-binding site is contributed by serine 529.

This sequence belongs to the FGAMS family. As to quaternary structure, monomer. Part of the FGAM synthase complex composed of 1 PurL, 1 PurQ and 2 PurS subunits.

The protein resides in the cytoplasm. It carries out the reaction N(2)-formyl-N(1)-(5-phospho-beta-D-ribosyl)glycinamide + L-glutamine + ATP + H2O = 2-formamido-N(1)-(5-O-phospho-beta-D-ribosyl)acetamidine + L-glutamate + ADP + phosphate + H(+). Its pathway is purine metabolism; IMP biosynthesis via de novo pathway; 5-amino-1-(5-phospho-D-ribosyl)imidazole from N(2)-formyl-N(1)-(5-phospho-D-ribosyl)glycinamide: step 1/2. Its function is as follows. Part of the phosphoribosylformylglycinamidine synthase complex involved in the purines biosynthetic pathway. Catalyzes the ATP-dependent conversion of formylglycinamide ribonucleotide (FGAR) and glutamine to yield formylglycinamidine ribonucleotide (FGAM) and glutamate. The FGAM synthase complex is composed of three subunits. PurQ produces an ammonia molecule by converting glutamine to glutamate. PurL transfers the ammonia molecule to FGAR to form FGAM in an ATP-dependent manner. PurS interacts with PurQ and PurL and is thought to assist in the transfer of the ammonia molecule from PurQ to PurL. The polypeptide is Phosphoribosylformylglycinamidine synthase subunit PurL (Granulibacter bethesdensis (strain ATCC BAA-1260 / CGDNIH1)).